The sequence spans 506 residues: MVLTLLLIICLALEVRSENEEGRLIEKLLGDYDKRIIPAKTLDHIIDVTLKLTLTNLISLNEKEEALTTNVWIEIQWNDYRLSWNTSEYEGIDLVRIPSELLWLPDVVLENNVDGQFEVAYYANVLVYNDGSMYWLPPAIYRSTCPIAVTYFPFDWQNCSLVFRSQTYNAHEVNLQLSAEEGEAVEWIHIDPEDFTENGEWTIRHRPAKKNYNWQLTKDDTDFQEIIFFLIIQRKPLFYIINIIAPCVLISSLVVLVYFLPAQAGGQKCTLSISVLLAQTIFLFLIAQKVPETSLNVPLIGKYLIFVMFVSMLIVMNCVIVLNVSLRTPNTHSLSEKIKHLFLGFLPKYLGMQLEPSEETPEKPQPRRRSSFGIMIKAEEYILKKPRSELMFEEQKDRHGLKRVNKMTSDIDIGTTVDLYKDLANFAPEIKSCVEACNFIAKSTKEQNDSGSENENWVLIGKVIDKACFWIALLLFSIGTLAIFLTGHFNQVPEFPFPGDPRKYVP.

Positions 1-17 (MVLTLLLIICLALEVRS) are cleaved as a signal peptide. The Extracellular segment spans residues 18-235 (ENEEGRLIEK…IIFFLIIQRK (218 aa)). Residue N85 is glycosylated (N-linked (GlcNAc...) asparagine). C145 and C159 are joined by a disulfide. 3 helical membrane passes run 236 to 260 (PLFYIINIIAPCVLISSLVVLVYFL), 269 to 287 (CTLSISVLLAQTIFLFLIA), and 303 to 324 (YLIFVMFVSMLIVMNCVIVLNV). At 325-466 (SLRTPNTHSL…WVLIGKVIDK (142 aa)) the chain is on the cytoplasmic side. Y381 is subject to Phosphotyrosine; by Tyr-kinases. A helical transmembrane segment spans residues 467–490 (ACFWIALLLFSIGTLAIFLTGHFN).

This sequence belongs to the ligand-gated ion channel (TC 1.A.9) family. Acetylcholine receptor (TC 1.A.9.1) subfamily. Gamma/CHRNG sub-subfamily. Pentamer of two alpha chains, and one each of the beta, delta, and gamma chains. In terms of processing, seems not to be glycosylated on Asn-158.

The protein localises to the postsynaptic cell membrane. It localises to the cell membrane. The catalysed reaction is K(+)(in) = K(+)(out). It carries out the reaction Na(+)(in) = Na(+)(out). After binding acetylcholine, the AChR responds by an extensive change in conformation that affects all subunits and leads to opening of an ion-conducting channel across the plasma membrane. The polypeptide is Acetylcholine receptor subunit gamma (CHRNG) (Tetronarce californica (Pacific electric ray)).